Consider the following 601-residue polypeptide: Glutamyl-tRNA(Gln) amidotransferase subunit B, mitochondrial (601 aa).

Residues M1–S55 constitute a mitochondrion transit peptide.

This sequence belongs to the GatB/GatE family. GatB subfamily. In terms of assembly, subunit of the heterotrimeric GatCAB amidotransferase (AdT) complex, composed of A, B and C subunits.

The protein localises to the mitochondrion. The enzyme catalyses L-glutamyl-tRNA(Gln) + L-glutamine + ATP + H2O = L-glutaminyl-tRNA(Gln) + L-glutamate + ADP + phosphate + H(+). Functionally, allows the formation of correctly charged Gln-tRNA(Gln) through the transamidation of misacylated Glu-tRNA(Gln) in the mitochondria. The reaction takes place in the presence of glutamine and ATP through an activated gamma-phospho-Glu-tRNA(Gln). The protein is Glutamyl-tRNA(Gln) amidotransferase subunit B, mitochondrial of Aspergillus niger (strain ATCC MYA-4892 / CBS 513.88 / FGSC A1513).